Reading from the N-terminus, the 231-residue chain is Endonuclease NucS (231 aa).

The protein belongs to the NucS endonuclease family.

The protein localises to the cytoplasm. Cleaves both 3' and 5' ssDNA extremities of branched DNA structures. This is Endonuclease NucS from Beutenbergia cavernae (strain ATCC BAA-8 / DSM 12333 / CCUG 43141 / JCM 11478 / NBRC 16432 / NCIMB 13614 / HKI 0122).